The following is a 425-amino-acid chain: uncharacterized protein (425 aa).

12 consecutive transmembrane segments (helical) span residues 15–35 (LICAFTGFNSGLPLFVLSQML), 48–68 (LIGAVTGVMLPYGLKFLWAPL), 84–104 (MLLSQVALLILLYIISLFDPL), 107–127 (LGTVANIALLIAFFSATQDIV), 149–169 (INAYRIAGLIPGGLSLYLAAI), 174–194 (TVFLWTALCMLAGIFMTLFLA), 225–245 (VIQAIGFLLFLFLYKFGDSFA), 271–291 (ALWSSILSGLAGGMIMLKLGI), 295–315 (LWLFGLVQMVTIGGFIWLAAF), 331–351 (VVIAAEYIGVGLGTAAFVAFM), 370–390 (LSALPSKVLGILSGYVVGAVG), and 395–415 (FWFCLFLAIPGMLCLFWVAPL).

To E.coli AmpG and yeast YBR220c.

It localises to the cell inner membrane. This is an uncharacterized protein from Haemophilus influenzae (strain ATCC 51907 / DSM 11121 / KW20 / Rd).